The sequence spans 161 residues: MORN repeat-containing protein 5 (161 aa).

MORN repeat units lie at residues 8–30 (YIGE…TETI), 31–53 (YVGE…SGSQ), and 54–75 (YDAI…DGLH).

In terms of tissue distribution, expressed in sperm (at protein level).

It is found in the cell projection. Its subcellular location is the cilium. The protein localises to the flagellum. This Homo sapiens (Human) protein is MORN repeat-containing protein 5 (MORN5).